A 351-amino-acid polypeptide reads, in one-letter code: RCC1 repeat-containing protein C10F6.04 (351 aa).

4 RCC1 repeats span residues 1–48 (MLLS…LLDE), 50–106 (SQLW…IVHA), 108–162 (RRRV…CVTN), and 163–212 (EGNL…VLQE).

The protein resides in the cytoplasm. Its subcellular location is the nucleus. In Schizosaccharomyces pombe (strain 972 / ATCC 24843) (Fission yeast), this protein is RCC1 repeat-containing protein C10F6.04.